Consider the following 431-residue polypeptide: Putative transcription factor R429 (431 aa).

Residues Asn28–Asp95 are a coiled coil. The tract at residues Ser142 to Lys187 is disordered. Over residues Gln143–Asn152 the composition is skewed to low complexity. A compositionally biased stretch (polar residues) spans Gln170–Gly181. Residues Cys218–Cys241 fold into a zinc finger.

It belongs to the nucleo-cytoplasmic large DNA viruses (NCLDVs) VLTF-3 family.

Its function is as follows. Putative transcription factor. This chain is Putative transcription factor R429, found in Acanthamoeba polyphaga (Amoeba).